Consider the following 266-residue polypeptide: Probable phosphoadenosine phosphosulfate reductase (266 aa).

Residues 219-246 are disordered; it reads TQPVREGEDERAGRWRGREKTECGLHSH. Over residues 223 to 243 the composition is skewed to basic and acidic residues; sequence REGEDERAGRWRGREKTECGL.

This sequence belongs to the PAPS reductase family. CysH subfamily.

The protein localises to the cytoplasm. It is found in the nucleus. The enzyme catalyses [thioredoxin]-disulfide + sulfite + adenosine 3',5'-bisphosphate + 2 H(+) = [thioredoxin]-dithiol + 3'-phosphoadenylyl sulfate. The protein operates within sulfur metabolism; hydrogen sulfide biosynthesis; sulfite from sulfate: step 3/3. In terms of biological role, the NADP dependent reduction of PAPS into sulfite involves thioredoxin which probably plays the role of a thiol carrier. Required for methionine synthesis. The chain is Probable phosphoadenosine phosphosulfate reductase (met16) from Schizosaccharomyces pombe (strain 972 / ATCC 24843) (Fission yeast).